A 423-amino-acid chain; its full sequence is ATP-citrate synthase alpha chain protein 2 (423 aa).

Citrate contacts are provided by asparagine 343, threonine 345, and arginine 376.

This sequence belongs to the succinate/malate CoA ligase beta subunit family. In terms of assembly, heterooctamer of 4 alpha and 4 beta chains.

It localises to the cytoplasm. Its subcellular location is the cytosol. It carries out the reaction oxaloacetate + acetyl-CoA + ADP + phosphate = citrate + ATP + CoA. In terms of biological role, ATP citrate-lyase is the primary enzyme responsible for the synthesis of cytosolic acetyl-CoA, used for the elongation of fatty acids and biosynthesis of isoprenoids, flavonoids and malonated derivatives. May supply substrate to the cytosolic acetyl-CoA carboxylase, which generates the malonyl-CoA used for the synthesis of a multitude of compounds, including very long chain fatty acids and flavonoids. Required for normal growth and development and elongation of C18 fatty acids to C20 to C24 fatty acids in seeds. In contrast to all known animal ACL enzymes having a homomeric structure, plant ACLs are composed of alpha and beta chains. This chain is ATP-citrate synthase alpha chain protein 2 (ACLA-2), found in Arabidopsis thaliana (Mouse-ear cress).